The chain runs to 181 residues: HGPRTase-like protein 2 (181 aa).

The protein belongs to the purine/pyrimidine phosphoribosyltransferase family. Archaeal HPRT subfamily.

Its function is as follows. May catalyze a purine salvage reaction, the substrate is unknown. The protein is HGPRTase-like protein 2 of Haloterrigena turkmenica (strain ATCC 51198 / DSM 5511 / JCM 9101 / NCIMB 13204 / VKM B-1734 / 4k) (Halococcus turkmenicus).